Reading from the N-terminus, the 462-residue chain is tRNA pseudouridine(32) synthase, mitochondrial (462 aa).

The N-terminal 24 residues, 1–24 (MQRNNRLRNLFTVPVIMARQLKRN), are a transit peptide targeting the mitochondrion. An S4 RNA-binding domain is found at 127 to 188 (KLVDVFISEF…HEPPVTSRPI (62 aa)). Asp-238 is an active-site residue.

This sequence belongs to the pseudouridine synthase RluA family.

It is found in the mitochondrion. The catalysed reaction is uridine(32) in tRNA = pseudouridine(32) in tRNA. Functionally, responsible for synthesis of pseudouridine from uracil-32 in mitochondrial transfer RNAs. In Saccharomyces cerevisiae (strain ATCC 204508 / S288c) (Baker's yeast), this protein is tRNA pseudouridine(32) synthase, mitochondrial (PUS9).